The sequence spans 621 residues: MCSGWSSSVIWRHTQFAVERCGFCGSSGPGAPLEPSTLGSKHLPWEAVSAGFADRNRNMDGAMWLSLCPDNEDLLWRKKHKLLQARGKGDLALQRRADAKLWKNYQLQRLAEELRRGYQEAQHLHVGGLDRLQSARLLGWGGGRARENEPDSQGPIQRRSARPPRAKEKHRAALSEERSCREELGQQHPRHSRPRKTAASPEKPQTTKATGRMNSHLAPPEKRKGRPEPSTKSGGGRCAIHPRRSKGADLERSNPLVAAVGEIGLVEEKEKGTARAGRRQLGKGAVCFVPALTSRSQGQSLEGKLRDLGQLWPADSSCRREAVSPASQCTLREKNKWQKELELAFEELFNINRKLKKHLCLYLALKPRMDQRPGEGHAFSEMQECGAGTPRGKKMADPEMLPAGEPRSPAEEEAQQAASKTDLKTFMGKAQNQKYQGTVKPTFRNGSQTLSPEAGIFINKEDSLLYSTESGQETPKLGTLAEGSLQLHLQDQADRVGSTASRQRQKAEMEQRRQKQLESLEQMEHPDMSLEIHYKAELEKERREQRRARLAHLKSSSTRAQERERGSELSTTSPSGTSLADDDRHSQMIRDQQQQILQQNRLHKQFLEEARKCLREFQNIC.

The interval 142-253 (GGRARENEPD…RSKGADLERS (112 aa)) is disordered. Basic residues predominate over residues 159–170 (RSARPPRAKEKH). A compositionally biased stretch (basic and acidic residues) spans 171 to 185 (RAALSEERSCREELG). Polar residues predominate over residues 203–213 (KPQTTKATGRM). The span at 219–229 (PPEKRKGRPEP) shows a compositional bias: basic and acidic residues. Residues 328 to 359 (QCTLREKNKWQKELELAFEELFNINRKLKKHL) are a coiled coil. Disordered stretches follow at residues 385–421 (CGAG…ASKT), 491–529 (DQAD…PDMS), and 543–586 (REQR…DRHS). The stretch at 498-525 (STASRQRQKAEMEQRRQKQLESLEQMEH) forms a coiled coil. Over residues 505–529 (QKAEMEQRRQKQLESLEQMEHPDMS) the composition is skewed to basic and acidic residues. The segment covering 568-578 (ELSTTSPSGTS) has biased composition (polar residues).

It localises to the cell projection. It is found in the cilium. In Homo sapiens (Human), this protein is CEP295 N-terminal-like protein.